The following is a 140-amino-acid chain: Perlin matrix protein (140 aa).

An N-terminal signal peptide occupies residues 1–26 (MTCTLRLTVAALVLLGICHLSRPVAA).

It belongs to the N16 matrix protein family. Heterooligomer; disulfide-linked. Pif97, Pif80, N16 and other proteins form a complex. In terms of tissue distribution, component of conchiolin, the organic matrix of nacre. Only expressed in the dorsal region of the mantle.

It localises to the secreted. Its subcellular location is the extracellular space. The protein resides in the extracellular matrix. In terms of biological role, may be specifically involved in the formation of the nacreous layer. The polypeptide is Perlin matrix protein (Margaritifera margaritifera (Freshwater pearl mussel)).